A 153-amino-acid polypeptide reads, in one-letter code: Large ribosomal subunit protein uL15 (153 aa).

A disordered region spans residues 1-48 (MRLNELSPAPGSKKDRKRVGRGDAGRGNYSGRGMKGQKARSGGATRPG).

This sequence belongs to the universal ribosomal protein uL15 family. Part of the 50S ribosomal subunit.

Its function is as follows. Binds to the 23S rRNA. In Dehalococcoides mccartyi (strain ATCC BAA-2266 / KCTC 15142 / 195) (Dehalococcoides ethenogenes (strain 195)), this protein is Large ribosomal subunit protein uL15.